Reading from the N-terminus, the 236-residue chain is Small ribosomal subunit protein uS2c (236 aa).

It belongs to the universal ribosomal protein uS2 family.

It is found in the plastid. The protein localises to the chloroplast. The protein is Small ribosomal subunit protein uS2c (rps2) of Buxus microphylla (Littleleaf boxwood).